The sequence spans 99 residues: DNA-binding protein Fis (99 aa).

A DNA-binding region (H-T-H motif) is located at residues 75–94 (QTRAASIMGINRSTLRKKLK).

It belongs to the transcriptional regulatory Fis family. As to quaternary structure, homodimer.

Activates ribosomal RNA transcription. Plays a direct role in upstream activation of rRNA promoters. The sequence is that of DNA-binding protein Fis from Buchnera aphidicola subsp. Schizaphis graminum (strain Sg).